An 809-amino-acid polypeptide reads, in one-letter code: Endoplasmin homolog (809 aa).

The first 18 residues, 1-18, serve as a signal peptide directing secretion; it reads MRKWALSCALLLVLLLTT. N111, D155, N168, and F200 together coordinate ATP. An N-linked (GlcNAc...) asparagine glycan is attached at N111. Acidic residues predominate over residues 293–320; sequence VPADEEESNEEEESTTETTEEEETEDDE. Residues 293 to 329 are disordered; sequence VPADEEESNEEEESTTETTEEEETEDDEEKKPKTKTV. 3 N-linked (GlcNAc...) asparagine glycosylation sites follow: N410, N450, and N617. The interval 766–809 is disordered; it reads SLDLSPDAAVEEEEEVEEPEVEEKESAKQEAEEPEHEQYDKDEL. Acidic residues predominate over residues 774-788; sequence AVEEEEEVEEPEVEE. Positions 789-809 are enriched in basic and acidic residues; the sequence is KESAKQEAEEPEHEQYDKDEL. A Prevents secretion from ER motif is present at residues 806-809; it reads KDEL.

It belongs to the heat shock protein 90 family.

Its subcellular location is the endoplasmic reticulum lumen. Functionally, may have a molecular chaperone role in the processing of secreted materials. The sequence is that of Endoplasmin homolog from Hordeum vulgare (Barley).